The chain runs to 71 residues: Large ribosomal subunit protein bL28 (71 aa).

Belongs to the bacterial ribosomal protein bL28 family.

This is Large ribosomal subunit protein bL28 from Rubrobacter xylanophilus (strain DSM 9941 / JCM 11954 / NBRC 16129 / PRD-1).